Reading from the N-terminus, the 634-residue chain is Sodium-dependent multivitamin transporter (634 aa).

12 helical membrane passes run 23 to 43 (FSVV…VIGL), 65 to 85 (MGCL…VAIL), 100 to 120 (FLGC…IPVF), 142 to 162 (ICGT…ALYA), 175 to 195 (LWLS…LGGL), 207 to 227 (LVMF…VGGL), 255 to 275 (FWTL…VNQA), 295 to 315 (AVFP…LVMF), 350 to 370 (LPGL…SSAF), 403 to 423 (FAYG…GSVL), 427 to 447 (LSIF…GLFF), and 455 to 475 (AIVG…GSIV). Asparagine 488 and asparagine 497 each carry an N-linked (GlcNAc...) asparagine glycan. A helical transmembrane segment spans residues 526 to 546 (LWYSAHNSTTVIVVGLIVSLL).

This sequence belongs to the sodium:solute symporter (SSF) (TC 2.A.21) family. As to quaternary structure, interacts with PDZD11. Expressed in the intestinal mucosa, liver and kidney (at protein level). Expressed in the colon.

It is found in the cell membrane. The protein localises to the apical cell membrane. The enzyme catalyses biotin(out) + 2 Na(+)(out) = biotin(in) + 2 Na(+)(in). The catalysed reaction is (R)-pantothenate(out) + 2 Na(+)(out) = (R)-pantothenate(in) + 2 Na(+)(in). It carries out the reaction (R)-lipoate(out) + 2 Na(+)(out) = (R)-lipoate(in) + 2 Na(+)(in). It catalyses the reaction iodide(out) + 2 Na(+)(out) = iodide(in) + 2 Na(+)(in). Sodium-dependent multivitamin transporter that mediates the electrogenic transport of pantothenate, biotin, lipoate and iodide. Functions as a Na(+)-coupled substrate symporter where the stoichiometry of Na(+):substrate is 2:1, creating an electrochemical Na(+) gradient used as driving force for substrate uptake. Required for biotin and pantothenate uptake in the intestine across the brush border membrane. Plays a role in the maintenance of intestinal mucosa integrity, by providing the gut mucosa with biotin. Contributes to the luminal uptake of biotin and pantothenate into the brain across the blood-brain barrier. This Mus musculus (Mouse) protein is Sodium-dependent multivitamin transporter.